The sequence spans 223 residues: Cutinase (223 aa).

Residues 1–19 form the signal peptide; the sequence is MKFFAFSMLIGEASPIVLA. A disulfide bridge links Cys46 with Cys124. The active-site Nucleophile is Ser135. Cys185 and Cys192 are disulfide-bonded. Asp189 is an active-site residue. His202 serves as the catalytic Proton donor/acceptor.

This sequence belongs to the cutinase family. Post-translationally, the 2 disulfide bonds play a critical role in holding the catalytic residues in juxta-position; reduction of the disulfide bridges results in the complete inactivation of the enzyme.

The protein resides in the secreted. It carries out the reaction cutin + H2O = cutin monomers.. Functionally, catalyzes the hydrolysis of complex carboxylic polyesters found in the cell wall of plants. Degrades cutin, a macromolecule that forms the structure of the plant cuticle. Allows pathogenic fungi to penetrate through the cuticular barrier into the host plant during the initial stage of fungal infection. This is Cutinase (CUT) from Didymella rabiei (Chickpea ascochyta blight fungus).